Reading from the N-terminus, the 412-residue chain is uncharacterized protein (412 aa).

Repeat copies occupy residues 112–116 (GSIRS), 117–121 (GSIRS), 122–126 (GSIRD), 127–131 (GSIRD), 132–136 (GSIRS), 137–141 (GNIRD), and 142–146 (GSVRS). Residues 112 to 146 (GSIRSGSIRSGSIRDGSIRDGSIRSGNIRDGSVRS) are 7 X 5 AA tandem repeats of G-[NS]-[IV]-R-[DNS]. Residues 116-126 (SGSIRSGSIRD) are compositionally biased toward low complexity. Residues 116–208 (SGSIRSGSIR…YSEKSIKPST (93 aa)) are disordered. Basic and acidic residues predominate over residues 192–208 (NHYAESEYSEKSIKPST).

This sequence belongs to the asfivirus B407L family.

This is an uncharacterized protein from Ornithodoros (relapsing fever ticks).